A 141-amino-acid polypeptide reads, in one-letter code: Nucleoside diphosphate kinase (141 aa).

ATP is bound by residues Lys-11, Phe-59, Arg-87, Thr-93, Arg-104, and Asn-114. The active-site Pros-phosphohistidine intermediate is His-117.

It belongs to the NDK family. As to quaternary structure, homotetramer. Requires Mg(2+) as cofactor.

The protein resides in the cytoplasm. It catalyses the reaction a 2'-deoxyribonucleoside 5'-diphosphate + ATP = a 2'-deoxyribonucleoside 5'-triphosphate + ADP. The enzyme catalyses a ribonucleoside 5'-diphosphate + ATP = a ribonucleoside 5'-triphosphate + ADP. Major role in the synthesis of nucleoside triphosphates other than ATP. The ATP gamma phosphate is transferred to the NDP beta phosphate via a ping-pong mechanism, using a phosphorylated active-site intermediate. This chain is Nucleoside diphosphate kinase, found in Xylella fastidiosa (strain M23).